Consider the following 298-residue polypeptide: Elongation factor Ts (298 aa).

The tract at residues 80–83 (TDFV) is involved in Mg(2+) ion dislocation from EF-Tu.

Belongs to the EF-Ts family.

The protein resides in the cytoplasm. Associates with the EF-Tu.GDP complex and induces the exchange of GDP to GTP. It remains bound to the aminoacyl-tRNA.EF-Tu.GTP complex up to the GTP hydrolysis stage on the ribosome. The sequence is that of Elongation factor Ts from Paracidovorax citrulli (strain AAC00-1) (Acidovorax citrulli).